The following is a 247-amino-acid chain: Mast cell protease 2 (247 aa).

Positions 1–19 (MHLLALHLLLFLLGSRAKA) are cleaved as a signal peptide. Positions 20–21 (GE) are cleaved as a propeptide — activation peptide. The region spanning 22-245 (IIGGTECKPH…YRPWINKILR (224 aa)) is the Peptidase S1 domain. Residues cysteine 51 and cysteine 67 are joined by a disulfide bond. The Charge relay system role is filled by histidine 66. An N-linked (GlcNAc...) asparagine glycan is attached at asparagine 80. The active-site Charge relay system is aspartate 110. 2 disulfides stabilise this stretch: cysteine 144-cysteine 209 and cysteine 175-cysteine 188. Catalysis depends on serine 203, which acts as the Charge relay system.

It belongs to the peptidase S1 family. Granzyme subfamily.

The chain is Mast cell protease 2 from Meriones unguiculatus (Mongolian jird).